Consider the following 232-residue polypeptide: MNQHPGIIGKKIGMTQIFNETGEVLRCTVVQAGCVVIGKRTLEKDGYSALILGLGERAEKHTTKPVAGAYKKSGQTPKRIVRELRCSPEHAAKYEIGTTLKVDEIFEVGQRVDAQGRSRGRGFSGVIRRWSFAGAVNSHGTHEYFRHGGSIGTNMTPGRTLPGLKMPGHYGDETVSALNLKIAKLLPEDNLILIEGPVPGPKNQVVTIRGAVKKRGGKGIVPVQQPTKKKGG.

It belongs to the universal ribosomal protein uL3 family. Part of the 50S ribosomal subunit. Forms a cluster with proteins L14 and L19.

One of the primary rRNA binding proteins, it binds directly near the 3'-end of the 23S rRNA, where it nucleates assembly of the 50S subunit. This is Large ribosomal subunit protein uL3 from Sorangium cellulosum (strain So ce56) (Polyangium cellulosum (strain So ce56)).